A 416-amino-acid chain; its full sequence is Phosphoribosylamine--glycine ligase (416 aa).

One can recognise an ATP-grasp domain in the interval 107–313 (KDFMKKYNVK…FVDLINAAMD (207 aa)). ATP is bound at residue 133–194 (LKKCTYPIVI…EEYLEGVEAS (62 aa)). 2 residues coordinate Mg(2+): glutamate 283 and asparagine 285.

It belongs to the GARS family. Mg(2+) serves as cofactor. Mn(2+) is required as a cofactor.

It carries out the reaction 5-phospho-beta-D-ribosylamine + glycine + ATP = N(1)-(5-phospho-beta-D-ribosyl)glycinamide + ADP + phosphate + H(+). Its pathway is purine metabolism; IMP biosynthesis via de novo pathway; N(1)-(5-phospho-D-ribosyl)glycinamide from 5-phospho-alpha-D-ribose 1-diphosphate: step 2/2. This chain is Phosphoribosylamine--glycine ligase, found in Clostridium acetobutylicum (strain ATCC 824 / DSM 792 / JCM 1419 / IAM 19013 / LMG 5710 / NBRC 13948 / NRRL B-527 / VKM B-1787 / 2291 / W).